Reading from the N-terminus, the 782-residue chain is MRQKTLDVLEFEKIKSLVANETISDLGLEKVNQMMPATNFETVVFQMEETDEIAQIYNKHRLPSLSGLSKVSAFIHRADIGGVLNVSELNLIKRLIQVQNQFKTFYNQLVEEDEGVKYPILDDKMNQLPVLTDLFHQINETCDTYDLYDNASYELQGIRSKISSTNQRIRQNLDRIVKSQANQKKLSDAIVTVRNERNVIPVKAEYRQDFNGIVHDQSASGQTLYIEPSSVVEMNNQISRLRHDEAIEKERILTQLTGYVAADKDALLVTEQVMGQLDFLIAKARYSRSIKGTKPIFKEERTVYLPKAYHPLLNRETVVANTIEFMEDIETVIITGPNTGGKTVTLKTLGLIIVMAQSGLLIPTLDGSQLSVFKNVYCDIGDEQSIEQSLSTFSSHMTNIVEILKHADKHSLVLFDELGAGTDPSEGAALAMSILDHVRKIGSLVMATTHYPELKAYSYNREGVMNASVEFDVDTLSPTYKLLMGVPGRSNAFDISKKLGLSLNIINKAKTMIGTDEKEINEMIESLERNYKRVETQRLELDRLVKEAEQVHDDLSKQYQQFQNYEKSLIEEAKEKANQKIKAATKEADDIIKDLRQLREQKGADVKEHELIDKKKRLDDHYEAKSIKQNVQKQKYDKIVAGDEVKVLSYGQKGEVLEIVNDEEAIVQMGIIKMKLPIEDLEKKQKEKVKPTKMVTRQNRQTIKTELDLRGYRYEDALIELDQYLDQAVLSNYEQVYIIHGKGTGALQKGVQQHLKKHKSVSDFRGGMPSEGGFGVTVATLK.

336-343 (GPNTGGKT) is a binding site for ATP. The Smr domain occupies 707 to 782 (LDLRGYRYED…GFGVTVATLK (76 aa)).

This sequence belongs to the DNA mismatch repair MutS family. MutS2 subfamily. Homodimer. Binds to stalled ribosomes, contacting rRNA.

In terms of biological role, endonuclease that is involved in the suppression of homologous recombination and thus may have a key role in the control of bacterial genetic diversity. Acts as a ribosome collision sensor, splitting the ribosome into its 2 subunits. Detects stalled/collided 70S ribosomes which it binds and splits by an ATP-hydrolysis driven conformational change. Acts upstream of the ribosome quality control system (RQC), a ribosome-associated complex that mediates the extraction of incompletely synthesized nascent chains from stalled ribosomes and their subsequent degradation. Probably generates substrates for RQC. In Staphylococcus aureus (strain JH1), this protein is Endonuclease MutS2.